The chain runs to 413 residues: Arginine biosynthesis bifunctional protein ArgJ (413 aa).

6 residues coordinate substrate: Thr158, Lys184, Thr195, Glu285, Asn408, and Ser413. The Nucleophile role is filled by Thr195.

It belongs to the ArgJ family. In terms of assembly, heterotetramer of two alpha and two beta chains.

It is found in the cytoplasm. The catalysed reaction is N(2)-acetyl-L-ornithine + L-glutamate = N-acetyl-L-glutamate + L-ornithine. It catalyses the reaction L-glutamate + acetyl-CoA = N-acetyl-L-glutamate + CoA + H(+). It participates in amino-acid biosynthesis; L-arginine biosynthesis; L-ornithine and N-acetyl-L-glutamate from L-glutamate and N(2)-acetyl-L-ornithine (cyclic): step 1/1. The protein operates within amino-acid biosynthesis; L-arginine biosynthesis; N(2)-acetyl-L-ornithine from L-glutamate: step 1/4. Catalyzes two activities which are involved in the cyclic version of arginine biosynthesis: the synthesis of N-acetylglutamate from glutamate and acetyl-CoA as the acetyl donor, and of ornithine by transacetylation between N(2)-acetylornithine and glutamate. This Rhizobium meliloti (strain 1021) (Ensifer meliloti) protein is Arginine biosynthesis bifunctional protein ArgJ.